The chain runs to 427 residues: Glucose-1-phosphate adenylyltransferase (427 aa).

Residues arginine 40, histidine 46, and arginine 52 each contribute to the AMP site. Tyrosine 114 is a binding site for alpha-D-glucose 1-phosphate. An AMP-binding site is contributed by arginine 130. Alpha-D-glucose 1-phosphate contacts are provided by residues glycine 179, 194–195, and serine 212; that span reads EK. Residue arginine 386 participates in AMP binding.

It belongs to the bacterial/plant glucose-1-phosphate adenylyltransferase family. In terms of assembly, homotetramer.

It catalyses the reaction alpha-D-glucose 1-phosphate + ATP + H(+) = ADP-alpha-D-glucose + diphosphate. The protein operates within glycan biosynthesis; glycogen biosynthesis. Its activity is regulated as follows. Allosterically activated by fructose-1,6-bisphosphate (F16BP) and inhibited by AMP. In terms of biological role, involved in the biosynthesis of ADP-glucose, a building block required for the elongation reactions to produce glycogen. Catalyzes the reaction between ATP and alpha-D-glucose 1-phosphate (G1P) to produce pyrophosphate and ADP-Glc. The polypeptide is Glucose-1-phosphate adenylyltransferase (Cronobacter sakazakii (strain ATCC BAA-894) (Enterobacter sakazakii)).